The chain runs to 196 residues: Peptidyl-tRNA hydrolase (196 aa).

Histidine 15 contributes to the tRNA binding site. Histidine 20 serves as the catalytic Proton acceptor. The tRNA site is built by tyrosine 66, asparagine 68, and asparagine 114.

The protein belongs to the PTH family. As to quaternary structure, monomer.

Its subcellular location is the cytoplasm. The enzyme catalyses an N-acyl-L-alpha-aminoacyl-tRNA + H2O = an N-acyl-L-amino acid + a tRNA + H(+). Functionally, hydrolyzes ribosome-free peptidyl-tRNAs (with 1 or more amino acids incorporated), which drop off the ribosome during protein synthesis, or as a result of ribosome stalling. In terms of biological role, catalyzes the release of premature peptidyl moieties from peptidyl-tRNA molecules trapped in stalled 50S ribosomal subunits, and thus maintains levels of free tRNAs and 50S ribosomes. The sequence is that of Peptidyl-tRNA hydrolase from Polynucleobacter necessarius subsp. necessarius (strain STIR1).